The following is a 390-amino-acid chain: Spore development regulator vosA (390 aa).

Residues 3 to 132 (NNTSSDFDLI…ADQGVKLRIR (130 aa)) enclose the Velvet domain. Residues 137-149 (TMLKRSTRPDEFH) show a composition bias toward basic and acidic residues. Disordered regions lie at residues 137 to 191 (TMLK…PVKR) and 265 to 390 (QASA…GTPQ). Residues 165–175 (PPSSSYGGYPP) show a composition bias toward low complexity. Residues 273-280 (IPDPTGQS) carry the Nuclear localization signal motif. Polar residues-rich tracts occupy residues 350 to 364 (QTPQANTPILPSQMV) and 371 to 390 (SSVTGPTTFNHPDSPNGTPQ).

This sequence belongs to the velvet family. VosA subfamily. Forms a heterodimeric complex with velB; the formation of the velB-vosA complex is light-dependent. Interacts with velA, velB and velC.

Its subcellular location is the nucleus. Component of the velB-VosA heterodimeric complex that plays a dual role in activating genes associated with spore maturation and repressing certain development-associated genes. The complex binds DNA through the DNA-binding domain of vosA that recognizes an 11-nucleotide consensus sequence 5'-CTGGCCGCGGC-3' consisting of two motifs in the promoters of key developmental regulatory genes. The protein is Spore development regulator vosA of Penicillium rubens (strain ATCC 28089 / DSM 1075 / NRRL 1951 / Wisconsin 54-1255) (Penicillium chrysogenum).